The following is a 388-amino-acid chain: Ribonuclease D (388 aa).

The 3'-5' exonuclease domain maps to 24–191 (QYVSDEASLN…LYPQLADKLK (168 aa)). Residues 230-310 (TEHQLAYLKV…QTADLSNPPE (81 aa)) enclose the HRDC domain.

Belongs to the RNase D family. Requires a divalent metal cation as cofactor.

Its subcellular location is the cytoplasm. The enzyme catalyses Exonucleolytic cleavage that removes extra residues from the 3'-terminus of tRNA to produce 5'-mononucleotides.. Its function is as follows. Exonuclease involved in the 3' processing of various precursor tRNAs. Initiates hydrolysis at the 3'-terminus of an RNA molecule and releases 5'-mononucleotides. This Shewanella sp. (strain ANA-3) protein is Ribonuclease D.